The chain runs to 399 residues: Forkhead box protein Q1 (399 aa).

Residues 1–112 form a disordered region; it reads MKLEVFAPRA…EGARSKPYTR (112 aa). Positions 32–54 are enriched in low complexity; it reads LSAAGDDSLGSDGDCAANSPAAG. Gly residues predominate over residues 55–66; it reads SGAGDLEGGGGE. Residues 114–205 constitute a DNA-binding region (fork-head); sequence PKPPYSYIAL…SEYTFADGVF (92 aa). Positions 211 to 263 are disordered; the sequence is RLSHRTTVSASGYGGGSPPGPAGTPQPAPTAGSSPIARSPARQEEGSSPASKF. Pro residues predominate over residues 228 to 238; the sequence is PPGPAGTPQPA.

It is found in the nucleus. Its function is as follows. Plays a role in hair follicle differentiation. The polypeptide is Forkhead box protein Q1 (Foxq1) (Rattus norvegicus (Rat)).